Reading from the N-terminus, the 247-residue chain is Reticulon-like protein B8 (247 aa).

The Reticulon domain occupies 61 to 247 (SADVLLWRNK…SGKFGLKKRE (187 aa)). The next 3 helical transmembrane spans lie at 71–91 (KISA…EWIN), 92–112 (FHFL…QFVW), and 166–186 (FLMA…CNFL).

It localises to the endoplasmic reticulum membrane. The protein is Reticulon-like protein B8 (RTNLB8) of Arabidopsis thaliana (Mouse-ear cress).